A 152-amino-acid chain; its full sequence is UPF0225 protein YchJ (152 aa).

This sequence belongs to the UPF0225 family.

In Shigella boydii serotype 18 (strain CDC 3083-94 / BS512), this protein is UPF0225 protein YchJ.